The chain runs to 118 residues: ATP synthase subunit gamma, chloroplastic (118 aa).

Cysteines 30 and 36 form a disulfide.

The protein belongs to the ATPase gamma chain family. In terms of assembly, F-type ATPases have 2 components, CF(1) - the catalytic core - and CF(0) - the membrane proton channel. CF(1) has five subunits: alpha(3), beta(3), gamma(1), delta(1), epsilon(1). CF(0) has four main subunits: a, b, b' and c.

The protein localises to the plastid. It localises to the chloroplast thylakoid membrane. In terms of biological role, produces ATP from ADP in the presence of a proton gradient across the membrane. The gamma chain is believed to be important in regulating ATPase activity and the flow of protons through the CF(0) complex. Inceptin is a proteolytic fragment produced by insect larvae that previously ingested the protein. This peptide mediate plant perception of herbivory through the induction of volatile, phenylpropanoid and protease inhibitor defenses such as ethylene, jasmonic acid and salicylic acid for example. The protein is ATP synthase subunit gamma, chloroplastic of Vigna unguiculata (Cowpea).